Reading from the N-terminus, the 753-residue chain is Transcription factor SOX-30 (753 aa).

Disordered stretches follow at residues 1–45 (MERA…TLSA) and 140–161 (QELG…TGPR). The span at 7–22 (EPQPQQRPLRPAPPLL) shows a compositional bias: pro residues. Positions 337 to 405 (VKRPMNAFMV…KHREEFPGWV (69 aa)) form a DNA-binding region, HMG box. Disordered regions lie at residues 514 to 540 (AGPS…PVSL) and 726 to 753 (PTST…LRDL). 2 stretches are compositionally biased toward polar residues: residues 531 to 540 (TVKQPTPVSL) and 726 to 739 (PTST…VNVT).

As to quaternary structure, interacts with CTNNB1, competitively inhibiting CTNNB1-TCF7L2/TCF4 interaction.

The protein localises to the nucleus. It localises to the cytoplasm. In terms of biological role, acts both as a transcriptional activator and a repressor. Binds to the DNA sequence 5'-ACAAT-3' and shows a preference for guanine residues surrounding this core motif. Binds to its own promoter and activates its own transcription. Required to activate the expression of postmeiotic genes involved in spermiogenesis. Binds to the promoter region of CTNNB1 and represses its transcription which leads to inhibition of Wnt signaling. Also inhibits Wnt signaling by binding to the CTNNB1 protein, preventing interaction of CTNNB1 with TCF7L2/TCF4. The protein is Transcription factor SOX-30 (SOX30) of Macaca fascicularis (Crab-eating macaque).